A 70-amino-acid chain; its full sequence is Sec-independent protein translocase protein TatA (70 aa).

A helical membrane pass occupies residues 1-21 (MGSFSVWHWLIVLVIVLVLFG). Residues 42 to 70 (GMADEDQTPPPADANANAKTVDHKADEIK) are disordered. A compositionally biased stretch (basic and acidic residues) spans 61–70 (TVDHKADEIK).

It belongs to the TatA/E family. As to quaternary structure, the Tat system comprises two distinct complexes: a TatABC complex, containing multiple copies of TatA, TatB and TatC subunits, and a separate TatA complex, containing only TatA subunits. Substrates initially bind to the TatABC complex, which probably triggers association of the separate TatA complex to form the active translocon.

It is found in the cell inner membrane. In terms of biological role, part of the twin-arginine translocation (Tat) system that transports large folded proteins containing a characteristic twin-arginine motif in their signal peptide across membranes. TatA could form the protein-conducting channel of the Tat system. The polypeptide is Sec-independent protein translocase protein TatA (Agrobacterium fabrum (strain C58 / ATCC 33970) (Agrobacterium tumefaciens (strain C58))).